The primary structure comprises 127 residues: Large ribosomal subunit protein bL12 (127 aa).

Belongs to the bacterial ribosomal protein bL12 family. As to quaternary structure, homodimer. Part of the ribosomal stalk of the 50S ribosomal subunit. Forms a multimeric L10(L12)X complex, where L10 forms an elongated spine to which 2 to 4 L12 dimers bind in a sequential fashion. Binds GTP-bound translation factors.

Its function is as follows. Forms part of the ribosomal stalk which helps the ribosome interact with GTP-bound translation factors. Is thus essential for accurate translation. This is Large ribosomal subunit protein bL12 from Desulforapulum autotrophicum (strain ATCC 43914 / DSM 3382 / VKM B-1955 / HRM2) (Desulfobacterium autotrophicum).